The sequence spans 562 residues: MGQTLSRADYAALYGPTTGDRIRLADTELLIEVERDLTIPGEEVRFGGGKVVRDGMGQSQVTREAGAMDTVITGAVVFDHQGITKADVGLRDGRIAGIGKAGNPDTQPGVTLIIGPGTEIIAGEGRILTPGGMDCHIHFICPQQVDHALHSGVTTLLGGGTGPAHGTLATTCTPGPWHIARMLEACAELPVNIGIAGKGNASLPAALEEQVRAGACALKLHEDWGTTPAAIDCCLTVADAMDVQVMIHTDTLNESGFVEDTMAAIAGRTIHAYHTEGAGGGHAPDIIRMVGMGNVLPSSTNPTRPYTGNTIEEHLDMLMVCHHLDRRVPEDVAFAESRIRRETIAAEDILHDLGAFSVISSDSQAMGRIGEVIIRTWQTADKMRRQRGRLAGETGENDNLRARRYIAKYTINPAIAHGISTHVGSIEPGKRADLVLWSPAFFGVKPEMVLVGGRISVAQMGDPNGSIPVQPIFSRPMWGHAGRASALFLSRAGLEAGAGDGLGKALIAVEQTRGIGKADMVLNDAMPQIEVDPETYEVRADGELLTCEPATELPMAQRYFLF.

Positions 131-562 constitute a Urease domain; that stretch reads GGMDCHIHFI…LPMAQRYFLF (432 aa). Histidine 136, histidine 138, and lysine 219 together coordinate Ni(2+). N6-carboxylysine is present on lysine 219. Residue histidine 221 participates in substrate binding. The Ni(2+) site is built by histidine 248 and histidine 274. Catalysis depends on histidine 322, which acts as the Proton donor. Ni(2+) is bound at residue aspartate 362.

It belongs to the metallo-dependent hydrolases superfamily. Urease alpha subunit family. In terms of assembly, heterotrimer of UreA (gamma), UreB (beta) and UreC (alpha) subunits. Three heterotrimers associate to form the active enzyme. Ni cation is required as a cofactor. In terms of processing, carboxylation allows a single lysine to coordinate two nickel ions.

The protein localises to the cytoplasm. It carries out the reaction urea + 2 H2O + H(+) = hydrogencarbonate + 2 NH4(+). It functions in the pathway nitrogen metabolism; urea degradation; CO(2) and NH(3) from urea (urease route): step 1/1. The polypeptide is Urease subunit alpha (Paracoccus denitrificans (strain Pd 1222)).